We begin with the raw amino-acid sequence, 313 residues long: D-alanine--D-alanine ligase (313 aa).

Residues 108 to 308 (KLVWQQTGVP…YSELVVKVLS (201 aa)) enclose the ATP-grasp domain. 138–193 (VAKLGLPLFVKPASEGSSVAVLKVKTADALPAALAEAATHDKIVIVEKSIEGGGEY) contributes to the ATP binding site. Positions 262, 275, and 277 each coordinate Mg(2+).

It belongs to the D-alanine--D-alanine ligase family. Mg(2+) serves as cofactor. It depends on Mn(2+) as a cofactor.

Its subcellular location is the cytoplasm. It catalyses the reaction 2 D-alanine + ATP = D-alanyl-D-alanine + ADP + phosphate + H(+). Its pathway is cell wall biogenesis; peptidoglycan biosynthesis. Its function is as follows. Cell wall formation. The chain is D-alanine--D-alanine ligase from Burkholderia cenocepacia (strain HI2424).